The following is a 279-amino-acid chain: Lacto-N-neotetraose biosynthesis glycosyltransferase LgtB (279 aa).

The protein belongs to the glycosyltransferase 25 family.

It functions in the pathway glycan metabolism; lacto-N-neotetraose biosynthesis. The protein operates within bacterial outer membrane biogenesis; lipooligosaccharide biosynthesis. Adds the second galactose to the lacto-N-tetraose chain in lipooligosaccharide (LOS). The chain is Lacto-N-neotetraose biosynthesis glycosyltransferase LgtB (lgtB) from Neisseria gonorrhoeae.